We begin with the raw amino-acid sequence, 469 residues long: Tetratricopeptide repeat protein 38 (469 aa).

A2 carries the N-acetylalanine modification. S5 is modified (phosphoserine). TPR repeat units lie at residues 108 to 141 (REQL…HPTD), 180 to 213 (SYVK…NPTD), and 252 to 285 (CHNY…SLQA).

It belongs to the TTC38 family.

The polypeptide is Tetratricopeptide repeat protein 38 (TTC38) (Homo sapiens (Human)).